Here is an 860-residue protein sequence, read N- to C-terminus: Leucine--tRNA ligase (860 aa).

Residues 42 to 52 (PYPSGRLHMGH) carry the 'HIGH' region motif. Positions 619–623 (KMSKS) match the 'KMSKS' region motif. ATP is bound at residue lysine 622.

This sequence belongs to the class-I aminoacyl-tRNA synthetase family.

It localises to the cytoplasm. It carries out the reaction tRNA(Leu) + L-leucine + ATP = L-leucyl-tRNA(Leu) + AMP + diphosphate. This Salmonella enteritidis PT4 (strain P125109) protein is Leucine--tRNA ligase.